Here is a 557-residue protein sequence, read N- to C-terminus: Proline--tRNA ligase (557 aa).

This sequence belongs to the class-II aminoacyl-tRNA synthetase family. ProS type 1 subfamily. Homodimer.

The protein resides in the cytoplasm. The catalysed reaction is tRNA(Pro) + L-proline + ATP = L-prolyl-tRNA(Pro) + AMP + diphosphate. In terms of biological role, catalyzes the attachment of proline to tRNA(Pro) in a two-step reaction: proline is first activated by ATP to form Pro-AMP and then transferred to the acceptor end of tRNA(Pro). As ProRS can inadvertently accommodate and process non-cognate amino acids such as alanine and cysteine, to avoid such errors it has two additional distinct editing activities against alanine. One activity is designated as 'pretransfer' editing and involves the tRNA(Pro)-independent hydrolysis of activated Ala-AMP. The other activity is designated 'posttransfer' editing and involves deacylation of mischarged Ala-tRNA(Pro). The misacylated Cys-tRNA(Pro) is not edited by ProRS. The chain is Proline--tRNA ligase from Baumannia cicadellinicola subsp. Homalodisca coagulata.